Reading from the N-terminus, the 529-residue chain is UDP-glucuronosyltransferase 2B18 (529 aa).

An N-terminal signal peptide occupies residues M1–G21. Residues N67 and N68 are each glycosylated (N-linked (GlcNAc...) asparagine). A helical transmembrane segment spans residues V493–L513.

It belongs to the UDP-glycosyltransferase family. In terms of tissue distribution, expressed in liver, prostate, kidney, testis, adrenal, bile duct, bladder, colon, small intestine, cerebellum and pancreas.

It is found in the microsome membrane. The protein localises to the endoplasmic reticulum membrane. The enzyme catalyses glucuronate acceptor + UDP-alpha-D-glucuronate = acceptor beta-D-glucuronoside + UDP + H(+). Functionally, UDPGT is of major importance in the conjugation and subsequent elimination of potentially toxic xenobiotics and endogenous compounds. This isozyme displays activity toward 3-hydroxyandrogens. It is principally active on C19 steroids having a hydroxyl group at position 3-alpha of the steroid molecule and also active on planar phenols and bile acids. In Macaca fascicularis (Crab-eating macaque), this protein is UDP-glucuronosyltransferase 2B18 (UGT2B18).